The chain runs to 306 residues: Curved DNA-binding protein (306 aa).

A J domain is found at 5 to 69; that stretch reads DYYAIMGVKP…QRRAEYDQMW (65 aa).

Its subcellular location is the cytoplasm. The protein localises to the nucleoid. Its function is as follows. DNA-binding protein that preferentially recognizes a curved DNA sequence. It is probably a functional analog of DnaJ; displays overlapping activities with DnaJ, but functions under different conditions, probably acting as a molecular chaperone in an adaptive response to environmental stresses other than heat shock. Lacks autonomous chaperone activity; binds native substrates and targets them for recognition by DnaK. Its activity is inhibited by the binding of CbpM. This is Curved DNA-binding protein from Shigella flexneri.